Consider the following 391-residue polypeptide: 3-ketoacyl-CoA thiolase (391 aa).

Cys95 acts as the Acyl-thioester intermediate in catalysis. Catalysis depends on proton acceptor residues His347 and Cys377.

This sequence belongs to the thiolase-like superfamily. Thiolase family. As to quaternary structure, heterotetramer of two alpha chains (FadB) and two beta chains (FadA).

It is found in the cytoplasm. The enzyme catalyses an acyl-CoA + acetyl-CoA = a 3-oxoacyl-CoA + CoA. It participates in lipid metabolism; fatty acid beta-oxidation. In terms of biological role, catalyzes the final step of fatty acid oxidation in which acetyl-CoA is released and the CoA ester of a fatty acid two carbons shorter is formed. This Pseudomonas fluorescens (strain Pf0-1) protein is 3-ketoacyl-CoA thiolase.